Consider the following 334-residue polypeptide: Aspartate carbamoyltransferase catalytic subunit (334 aa).

Carbamoyl phosphate contacts are provided by R71 and T72. L-aspartate is bound at residue K99. Carbamoyl phosphate is bound by residues R121, H151, and Q154. L-aspartate-binding residues include R184 and R239. Positions 280 and 281 each coordinate carbamoyl phosphate.

It belongs to the aspartate/ornithine carbamoyltransferase superfamily. ATCase family. As to quaternary structure, heterododecamer (2C3:3R2) of six catalytic PyrB chains organized as two trimers (C3), and six regulatory PyrI chains organized as three dimers (R2).

The enzyme catalyses carbamoyl phosphate + L-aspartate = N-carbamoyl-L-aspartate + phosphate + H(+). It participates in pyrimidine metabolism; UMP biosynthesis via de novo pathway; (S)-dihydroorotate from bicarbonate: step 2/3. In terms of biological role, catalyzes the condensation of carbamoyl phosphate and aspartate to form carbamoyl aspartate and inorganic phosphate, the committed step in the de novo pyrimidine nucleotide biosynthesis pathway. This is Aspartate carbamoyltransferase catalytic subunit from Pseudomonas fluorescens (strain SBW25).